A 278-amino-acid polypeptide reads, in one-letter code: Thiazole synthase (278 aa).

The active-site Schiff-base intermediate with DXP is the lysine 109. Residues glycine 170, 197–198 (AG), and 219–220 (NT) each bind 1-deoxy-D-xylulose 5-phosphate.

Belongs to the ThiG family. In terms of assembly, homotetramer. Forms heterodimers with either ThiH or ThiS.

It localises to the cytoplasm. It carries out the reaction [ThiS sulfur-carrier protein]-C-terminal-Gly-aminoethanethioate + 2-iminoacetate + 1-deoxy-D-xylulose 5-phosphate = [ThiS sulfur-carrier protein]-C-terminal Gly-Gly + 2-[(2R,5Z)-2-carboxy-4-methylthiazol-5(2H)-ylidene]ethyl phosphate + 2 H2O + H(+). Its pathway is cofactor biosynthesis; thiamine diphosphate biosynthesis. Its function is as follows. Catalyzes the rearrangement of 1-deoxy-D-xylulose 5-phosphate (DXP) to produce the thiazole phosphate moiety of thiamine. Sulfur is provided by the thiocarboxylate moiety of the carrier protein ThiS. In vitro, sulfur can be provided by H(2)S. This Cupriavidus pinatubonensis (strain JMP 134 / LMG 1197) (Cupriavidus necator (strain JMP 134)) protein is Thiazole synthase.